The following is a 277-amino-acid chain: Hydroxyethylthiazole kinase (277 aa).

Position 56 (Met-56) interacts with substrate. Residues Arg-131 and Thr-177 each coordinate ATP. Residue Ala-204 coordinates substrate.

This sequence belongs to the Thz kinase family. Mg(2+) is required as a cofactor.

It catalyses the reaction 5-(2-hydroxyethyl)-4-methylthiazole + ATP = 4-methyl-5-(2-phosphooxyethyl)-thiazole + ADP + H(+). It participates in cofactor biosynthesis; thiamine diphosphate biosynthesis; 4-methyl-5-(2-phosphoethyl)-thiazole from 5-(2-hydroxyethyl)-4-methylthiazole: step 1/1. Its function is as follows. Catalyzes the phosphorylation of the hydroxyl group of 4-methyl-5-beta-hydroxyethylthiazole (THZ). This chain is Hydroxyethylthiazole kinase, found in Gemmatimonas aurantiaca (strain DSM 14586 / JCM 11422 / NBRC 100505 / T-27).